We begin with the raw amino-acid sequence, 411 residues long: Adenylosuccinate synthetase (411 aa).

GTP contacts are provided by residues 11 to 17 and 39 to 41; these read GDEGKGK and GHT. Residue Asp12 is the Proton acceptor of the active site. Mg(2+)-binding residues include Asp12 and Gly39. Residues 12 to 15, 37 to 40, Thr121, Arg135, Gln215, Thr230, and Arg294 each bind IMP; these read DEGK and NAGH. His40 acts as the Proton donor in catalysis. 290–296 provides a ligand contact to substrate; the sequence is TTTKRPR. Residues Arg296, 322–324, and 400–402 contribute to the GTP site; these read KLD and STS.

This sequence belongs to the adenylosuccinate synthetase family. In terms of assembly, homodimer. The cofactor is Mg(2+).

It is found in the cytoplasm. It carries out the reaction IMP + L-aspartate + GTP = N(6)-(1,2-dicarboxyethyl)-AMP + GDP + phosphate + 2 H(+). It functions in the pathway purine metabolism; AMP biosynthesis via de novo pathway; AMP from IMP: step 1/2. In terms of biological role, plays an important role in the de novo pathway of purine nucleotide biosynthesis. Catalyzes the first committed step in the biosynthesis of AMP from IMP. The protein is Adenylosuccinate synthetase of Helicobacter pylori (strain Shi470).